A 740-amino-acid polypeptide reads, in one-letter code: MEQTYEYAWIIPFIPLPVPMLIGAGLILFPTATKSFRRMWAFQSVLLLSIVMVFSIYLSIQQINSRSFYQYVWSWIINNDFSLEFGYLIDPLTSIMSILITTVGIMVLIYSDNYMAHDQGYLRFFAYMSFFSTSMLGLVTSSNLIQIYIFWELVGLCSYLLIGFWFTRPVAANACQKAFVTNRVGDFGLLLGILGFYWITGSFEFRNFFEIFNNLIYNNEVDFLFVTLCAVLLFAGAVAKSAQFPLHVWLPDAMEGPTPISALIHAATMVAAGIFLVARLLPLFRVIPYIMYLISVIGIITVLLGATLALAQKDIKRGLAYSTMSQLGYMMLALGMGSYRSALFHLITHAYSKALLFLGSGSIIHSMETIVGYSPAKSQNMGLMGGLRKHVPITKITFLLGTLSLCGIPPLACFWSKDEILNDSWLYSPIFAIIAWATAGLTAFYMFRIYLLTFEGHLNVHFKNYGGKQKTPFYSISLWGKNGVKKNSCLLTMNNNESTYFFSKTKYPLDKNGRKMTRPFMTIAHFEHKAVYSYPYESDNTMLFPIFVLGLFTLFVGSLGIPFNQEGGNLDILSKWLAPSINLLHQKSNNSMDWNEFLKDAVLSVSIAYFGIFIASFLYKPIYSSLKNFELINSFVKKGPKRILWDKIINGIYDWSYNRAYIDAFYTRFLVGGIRGLAEFTHFFDRRVIDGMTNGVGVISFIVGEGIKYIGGGRISSYLFLYLAYVLVFLLVYYLLFSTF.

Transmembrane regions (helical) follow at residues 9 to 29 (WIIP…LILF), 40 to 60 (WAFQ…YLSI), 89 to 109 (IDPL…MVLI), 125 to 145 (FAYM…SNLI), 147 to 167 (IYIF…FWFT), 185 to 205 (GDFG…SFEF), 219 to 239 (NEVD…GAVA), 258 to 278 (TPIS…FLVA), 286 to 306 (VIPY…LLGA), 327 to 347 (LGYM…FHLI), 354 to 374 (ALLF…VGYS), 396 to 416 (ITFL…CFWS), 425 to 445 (WLYS…TAFY), 543 to 563 (LFPI…GIPF), 602 to 622 (VLSV…YKPI), and 717 to 737 (SYLF…YLLF).

The protein belongs to the complex I subunit 5 family. NDH is composed of at least 16 different subunits, 5 of which are encoded in the nucleus.

Its subcellular location is the plastid. It is found in the chloroplast thylakoid membrane. It catalyses the reaction a plastoquinone + NADH + (n+1) H(+)(in) = a plastoquinol + NAD(+) + n H(+)(out). The enzyme catalyses a plastoquinone + NADPH + (n+1) H(+)(in) = a plastoquinol + NADP(+) + n H(+)(out). In terms of biological role, NDH shuttles electrons from NAD(P)H:plastoquinone, via FMN and iron-sulfur (Fe-S) centers, to quinones in the photosynthetic chain and possibly in a chloroplast respiratory chain. The immediate electron acceptor for the enzyme in this species is believed to be plastoquinone. Couples the redox reaction to proton translocation, and thus conserves the redox energy in a proton gradient. The chain is NAD(P)H-quinone oxidoreductase subunit 5, chloroplastic (ndhF) from Nicotiana tomentosiformis (Tobacco).